The chain runs to 210 residues: Protein GrpE (210 aa).

It belongs to the GrpE family. In terms of assembly, homodimer.

The protein resides in the cytoplasm. Its function is as follows. Participates actively in the response to hyperosmotic and heat shock by preventing the aggregation of stress-denatured proteins, in association with DnaK and GrpE. It is the nucleotide exchange factor for DnaK and may function as a thermosensor. Unfolded proteins bind initially to DnaJ; upon interaction with the DnaJ-bound protein, DnaK hydrolyzes its bound ATP, resulting in the formation of a stable complex. GrpE releases ADP from DnaK; ATP binding to DnaK triggers the release of the substrate protein, thus completing the reaction cycle. Several rounds of ATP-dependent interactions between DnaJ, DnaK and GrpE are required for fully efficient folding. In Rhizobium leguminosarum bv. trifolii (strain WSM2304), this protein is Protein GrpE.